Reading from the N-terminus, the 99-residue chain is MKVTDVKVRKINGESRLRGVSSITFENQFVVNDIRIIEGERGIFIAMPSRKTSKGNFRDIAHPINSETRQIIENCIKTKYQDLLDNPPQEEDFSQNSEN.

This sequence belongs to the SpoVG family.

Functionally, could be involved in septation. This Aster yellows witches'-broom phytoplasma (strain AYWB) protein is Putative septation protein SpoVG.